The sequence spans 791 residues: Cellobionic acid phosphorylase (791 aa).

Catalysis depends on Asp-478, which acts as the Proton donor.

It belongs to the glycosyl hydrolase 94 family. Cellobionic acid phosphorylase subfamily. Homodimer.

It catalyses the reaction 4-O-beta-D-glucopyranosyl-D-gluconate + phosphate = D-gluconate + alpha-D-glucose 1-phosphate. Its pathway is glycan metabolism; cellulose degradation. In terms of biological role, catalyzes the reversible phosphorolysis of cellobionic acid (4-O-beta-D-glucopyranosyl-D-gluconate), a probable step in cellulose degradation. May be part of a metabolic pathway where cellobionic acid is converted into alpha-D-glucose 1-phosphate and D-gluconic acid to enter glycolysis and the pentose phosphate pathway, respectively. Produces 4-O-beta-D-glucopyranosyl-D-glucuronate from alpha-D-glucose 1-phosphate and D-glucuronate with low activity in the synthetic direction. The protein is Cellobionic acid phosphorylase of Neurospora crassa (strain ATCC 24698 / 74-OR23-1A / CBS 708.71 / DSM 1257 / FGSC 987).